Consider the following 711-residue polypeptide: Progesterone receptor (711 aa).

The segment at 1–347 is modulating, Pro-Rich; it reads MEDKSKQCLQ…YGFDALPRKI (347 aa). NR C4-type zinc fingers lie at residues 348 to 368 and 384 to 408; these read CLIC…CGSC and CAGR…LKKC. The nuclear receptor DNA-binding region spans 348–420; sequence CLICSDEASG…AGMVLGGRKF (73 aa). The 235-residue stretch at 457-691 folds into the NR LBD domain; it reads QEVQYFPELL…EFPEMMTEVI (235 aa).

It belongs to the nuclear hormone receptor family. NR3 subfamily. As to expression, expressed in all tissues examined: highly expressed in testis and brain. Also expressed in heart, lung, liver, kidney, stomach and small intestine.

The protein resides in the nucleus. The steroid hormones and their receptors are involved in the regulation of eukaryotic gene expression and affect cellular proliferation and differentiation in target tissues. This Rana dybowskii (Dybovsky's frog) protein is Progesterone receptor (pgr).